The primary structure comprises 514 residues: Alstonine synthase (514 aa).

The chain crosses the membrane as a helical span at residues 4–24; it reads PQFSCLLPAFFLLVVFLFLLI. A glycan (N-linked (GlcNAc...) asparagine) is linked at Asn-428. Cys-450 lines the heme pocket.

It belongs to the cytochrome P450 family. Heme is required as a cofactor.

It localises to the membrane. It catalyses the reaction tetrahydroalstonine + A + reduced [NADPH--hemoprotein reductase] + O2 = alstonine + AH2 + oxidized [NADPH--hemoprotein reductase] + 2 H2O + H(+). It participates in alkaloid biosynthesis. Its function is as follows. A cytochrome P450 monooxygenase involved in the biosynthesis of pentacyclic alkaloids natural products such as alstonine, putative antipsychotic compounds. Catalyzes the conversion of tetrahydroalstonine to alstonine. No oxidative activity towards ajmalicine. The polypeptide is Alstonine synthase (Alstonia scholaris (Dogbane)).